The chain runs to 422 residues: Fasciclin-like arabinogalactan protein 10 (422 aa).

The first 25 residues, 1–25 (MATSRAFTLFAFTLSLLTVASTVSG), serve as a signal peptide directing secretion. FAS1 domains lie at 26-172 (HNIT…NAPI) and 187-327 (GVSN…DNVL). N27, N128, N162, N190, and N244 each carry an N-linked (GlcNAc...) asparagine glycan. Residues 336–397 (SSSPAPAPEP…PTSSENSNAK (62 aa)) are disordered. Over residues 340–374 (APAPEPVSAPTPTPAKSPSPVEAPSPTAASPPAPP) the composition is skewed to pro residues. A compositionally biased stretch (polar residues) spans 386 to 397 (DSPTSSENSNAK). Residue N398 is the site of GPI-anchor amidated asparagine attachment. Positions 399–422 (AAFHVNAPALFTALVTIAATSLLL) are cleaved as a propeptide — removed in mature form.

The protein belongs to the fasciclin-like AGP family.

The protein localises to the cell membrane. In terms of biological role, may be a cell surface adhesion protein. In Arabidopsis thaliana (Mouse-ear cress), this protein is Fasciclin-like arabinogalactan protein 10 (FLA10).